Reading from the N-terminus, the 187-residue chain is Elongation factor P (187 aa).

The protein belongs to the elongation factor P family.

Its subcellular location is the cytoplasm. Its pathway is protein biosynthesis; polypeptide chain elongation. In terms of biological role, involved in peptide bond synthesis. Stimulates efficient translation and peptide-bond synthesis on native or reconstituted 70S ribosomes in vitro. Probably functions indirectly by altering the affinity of the ribosome for aminoacyl-tRNA, thus increasing their reactivity as acceptors for peptidyl transferase. This Ruegeria sp. (strain TM1040) (Silicibacter sp.) protein is Elongation factor P.